We begin with the raw amino-acid sequence, 465 residues long: MIQLYNSLTNKKEPFVPIVPGKVSMYVCGPTVYNYIHVGNARPAIAFDTVRRYLTYRGYEVKYVLNFTDVDDKIIRTANELGEDTETLTNRYIEAYLADTGALNVQPADVHPRVTDTMEEIIEFIRQLETEGFAYESEGDVYFRTKKFETYGKLSQQSIEDLRAGSRVDVGEKKEDPLDFVLWKAAKPDEPSWDSPWGKGRPGWHIECSAMAKKHLGTTIDIHAGGHDLKFPHHENEIAQSEACNHAKFANYWLHNGFINIENEKMSKSLGNFLLVHEALKEVDPMVLRFFMLSVHYRHPINYSRELIEQAANGWSRIKEAYQNIEYRLSVTAGLGEASESMERKLESIKASFIESMDDDINTANAVTVLFDLAREANIYAKADHVAKATLEQVLSLFDELTGVLGLTLAEEKELLDAEIDQLIQERNDARAARNFARADEIRDLLKEQNIQLEDTAQGVRWKRL.

Position 28 (cysteine 28) interacts with Zn(2+). The 'HIGH' region motif lies at proline 30 to asparagine 40. Zn(2+) is bound by residues cysteine 208, histidine 233, and glutamate 237. Residues lysine 265–serine 269 carry the 'KMSKS' region motif. Lysine 268 provides a ligand contact to ATP.

Belongs to the class-I aminoacyl-tRNA synthetase family. As to quaternary structure, monomer. Zn(2+) serves as cofactor.

Its subcellular location is the cytoplasm. It catalyses the reaction tRNA(Cys) + L-cysteine + ATP = L-cysteinyl-tRNA(Cys) + AMP + diphosphate. This is Cysteine--tRNA ligase from Exiguobacterium sp. (strain ATCC BAA-1283 / AT1b).